A 148-amino-acid chain; its full sequence is DnaJ homolog subfamily C member 24 (148 aa).

The J domain maps to 10–81 (DWYSILGADP…ETKKKYDLQR (72 aa)). One can recognise a DPH-type MB domain in the interval 92 to 147 (VDAQVRLEEMSWNQGDESFFLSCRCGGKYTVSKDEAQEATLISCDACSLIVELLHQ). Positions 114, 116, 135, and 138 each coordinate Zn(2+).

It belongs to the DPH4 family. Monomer and homooligomer. Iron binding promotes oligomerization. In terms of tissue distribution, detected in heart, brain, spleen, lung, liver, kidney and testis.

Its subcellular location is the cytoplasm. The protein localises to the cytoskeleton. It participates in protein modification; peptidyl-diphthamide biosynthesis. Functionally, the iron-bound form is redox-active and can function as electron carrier. Stimulates the ATPase activity of several Hsp70-type chaperones. This ability is enhanced by iron-binding. Plays a role in the diphthamide biosynthesis, a post-translational modification of histidine which occurs in translation elongation factor 2 (EEF2). This Mus musculus (Mouse) protein is DnaJ homolog subfamily C member 24 (Dnajc24).